The following is a 394-amino-acid chain: MDTLGRKVVVCDNGTGFVKCGYAGSNFPEHIFPALVGRPIIRSTAKVGNIEIKDLMVGDEASELRSMLEVNYPMENGIVRNWDDMKHLWDYTFGPEKLNIDTKNCKILLTEPPMNPTKNREKIVEVMFETYQFSGVYVAIQAVLTLYAQGLLTGVVVDSGDGVTHICPVYEGFSLPHLTRRLDIAGRDITRYLIKLLLLRGYAFNHSADFETVRMIKEKLCYVGYNIEQEQKLALETTVLVESYTLPDGRIIKVGGERFEAPEALFQPHLINVEGVGVAELLFNTIQAADIDTRSEFYKHIVLSGGSTMYPGLPSRLERELKQLYLERVLKGDVEKLSKFKIRIEDPPRRKHMVFLGGAVLADIMKDKDNFWMTRQEYQEKGVRVLEKLGVTVR.

Residues 160 to 162, 214 to 218, and 305 to 310 each bind ATP; these read GDG, RMIKE, and GGSTMY.

Belongs to the actin family. ARP2 subfamily. In terms of assembly, component of the Arp2/3 complex composed of ACTR2/ARP2, ACTR3/ARP3, ARPC1B/p41-ARC, ARPC2/p34-ARC, ARPC3/p21-ARC, ARPC4/p20-ARC and ARPC5/p16-ARC.

It localises to the cytoplasm. The protein resides in the cytoskeleton. Its subcellular location is the cell projection. It is found in the nucleus. Functionally, ATP-binding component of the Arp2/3 complex, a multiprotein complex that mediates actin polymerization upon stimulation by nucleation-promoting factor (NPF). The Arp2/3 complex mediates the formation of branched actin networks in the cytoplasm, providing the force for cell motility. Seems to contact the pointed end of the daughter actin filament. In addition to its role in the cytoplasmic cytoskeleton, the Arp2/3 complex also promotes actin polymerization in the nucleus, thereby regulating gene transcription and repair of damaged DNA. The Arp2/3 complex promotes homologous recombination (HR) repair in response to DNA damage by promoting nuclear actin polymerization, leading to drive motility of double-strand breaks (DSBs). This chain is Actin-related protein 2 (ACTR2), found in Gallus gallus (Chicken).